A 551-amino-acid polypeptide reads, in one-letter code: UvrABC system protein C (551 aa).

One can recognise a GIY-YIG domain in the interval 12–87; it reads EKPGVYIFKN…IFKHKPKYNI (76 aa). The region spanning 193-228 is the UVR domain; that stretch reads EFVKDYIEQKMNYHSKMLDFENAAKYRDLLLSFEKL.

Belongs to the UvrC family. Interacts with UvrB in an incision complex.

It localises to the cytoplasm. The UvrABC repair system catalyzes the recognition and processing of DNA lesions. UvrC both incises the 5' and 3' sides of the lesion. The N-terminal half is responsible for the 3' incision and the C-terminal half is responsible for the 5' incision. In Thermosipho africanus (strain TCF52B), this protein is UvrABC system protein C.